The chain runs to 57 residues: Small ribosomal subunit protein eS27 (57 aa).

Zn(2+) contacts are provided by C10, C13, C29, and C32. The segment at 10–32 (CPDCENEQTVFGKASTEVACAVC) adopts a C4-type zinc-finger fold.

The protein belongs to the eukaryotic ribosomal protein eS27 family. As to quaternary structure, part of the 30S ribosomal subunit. Zn(2+) serves as cofactor.

This is Small ribosomal subunit protein eS27 from Halobacterium salinarum (strain ATCC 29341 / DSM 671 / R1).